We begin with the raw amino-acid sequence, 480 residues long: Probable serine/threonine-protein phosphatase 2A regulatory subunit B'' subunit TON2 (480 aa).

EF-hand domains follow at residues 186–221, 294–329, and 369–404; these read VSLT…LIPN, TSAQ…TLTE, and DTPE…VHQK. The Ca(2+) site is built by aspartate 307, aspartate 309, serine 311, serine 313, and glutamate 318.

Interacts with PP2AA1. Widely expressed.

The protein localises to the cytoplasm. It is found in the cytoskeleton. Probable regulatory subunit of type 2A protein phosphatase involved in the control of the dynamic organization of the cortical cytoskeleton. Plays an important role in the organization of interphase microtubule arrays in part through the regulation of nucleation geometry. Required for the reorganization of cortical arrays in response to light. This chain is Probable serine/threonine-protein phosphatase 2A regulatory subunit B'' subunit TON2 (TON2), found in Arabidopsis thaliana (Mouse-ear cress).